The sequence spans 456 residues: Two pore potassium channel c (456 aa).

The span at methionine 1–proline 19 shows a compositional bias: low complexity. A disordered region spans residues methionine 1 to glycine 112. The Cytoplasmic segment spans residues methionine 1 to proline 152. Residues histidine 52 to proline 67 are compositionally biased toward pro residues. A helical transmembrane segment spans residues alanine 153 to tyrosine 173. Residues aspartate 192 to proline 211 constitute an intramembrane region (pore-forming). Residues phenylalanine 223 to leucine 243 traverse the membrane as a helical segment. Over aspartate 244–arginine 279 the chain is Cytoplasmic. The chain crosses the membrane as a helical span at residues methionine 280–leucine 300. An intramembrane region (pore-forming) is located at residues aspartate 310–phenylalanine 329. A helical transmembrane segment spans residues leucine 336 to leucine 356. The Cytoplasmic portion of the chain corresponds to alanine 357 to serine 456. EF-hand domains follow at residues leucine 373 to lysine 408 and lysine 412 to leucine 447. Residues aspartate 386, aspartate 388, asparagine 390, tyrosine 392, glutamate 397, aspartate 425, lysine 431, and aspartate 436 each contribute to the Ca(2+) site.

Belongs to the two pore domain potassium channel (TC 1.A.1.7) family. Homodimer.

It localises to the membrane. Inward-rectifying potassium channel. This is Two pore potassium channel c (TPKC) from Oryza sativa subsp. japonica (Rice).